A 353-amino-acid chain; its full sequence is 2-oxoglutarate-dependent dioxygenase phqC (353 aa).

The region spanning 199-315 is the Fe2OG dioxygenase domain; it reads CASELRLNNY…RRSCAFFLKA (117 aa). Residues His227, Asp229, and His287 each coordinate Fe cation. 2-oxoglutarate is bound at residue Arg302.

The protein belongs to the iron/ascorbate-dependent oxidoreductase family. It depends on Fe(2+) as a cofactor.

It functions in the pathway alkaloid biosynthesis. In terms of biological role, 2-oxoglutarate-dependent dioxygenase; part of the gene cluster that mediates the biosynthesis of paraherquamide, a fungal indole alkaloid that belongs to a family of natural products containing a characteristic bicyclo[2.2.2]diazaoctane core. The first steps in the biosynthesis of paraherquamide is the production of the beta-methyl-proline precursor from L-isoleucine. They require oxidation of a terminally hydroxylated L-isoleucine to the corresponding aldehyde by enzymes which have still to be identified. Spontaneous cyclization and dehydration would yield the 4-methyl pyrolline-5-carboxylic acid, which is then reduced by the pyrroline-5-carboxylate reductase phqD leading to the beta-methyl-proline precursor. The next step of paraherquamide biosynthesis involves coupling of beta-methyl-proline and L-tryptophan by the bimodular NRPS phqB, to produce a monooxopiperazine intermediate. The reductase (R) domain of phqB utilizes NADPH for hydride transfer to reduce the thioester bond of the T domain-tethered linear dipeptide to a hemithioaminal intermediate, which spontaneously cleaves the C-S bond to release the aldehyde product. This compound undergoes spontaneous cyclization and dehydration to give a dienamine which is reverse prenylated at C-2 by the reverse prenyltransferase phqJ. The other prenyltransferase present in the cluster, phqI may be a redundant gene in the pathway. During biosynthetic assembly, the key step to produce the polycyclic core is catalyzed by the bifunctional reductase and intramolecular [4+2] Diels-Alderase, phqE, resulting in formation of the [2.2.2] diazaoctane intermediate preparaherquamide. Following formation of preparaherquamide, an indole 2,3-epoxidation-initiated pinacol-like rearrangement is catalyzed by the phqK FAD-dependent monooxygenase. The prenyltransferase phqA, the cytochrome P450 monooxygenase phqL, and the FAD-linked oxidoreductase phqH (or the cytochrome P450 monooxygenase phqM), are proposed to be involved in the formation of the pyran ring. The FAD-dependent monooxygenase phqK is likely responsible for generation of the spiro-oxindole, and the N-methylation is likely mediated by the phqN methyltransferase leading to the isolable natural product paraherquamide F. However, the order of these biosynthetic steps has still to be determined. In late-stage paraherquamide biosynthesis, the third P450 monooxygenase, phqO, is probably responsible for the C-14 hydroxylation, transforming paraherquamide F to paraherquamide G, and paraherquamide E to the final product paraherquamide A. The expansion from the 6-membered ring pyran (in paraherquamides F and G) to the 7-membered dioxepin ring (in paraherquamides A and E) represents a poorly understood but intriguing process that probably involves the 2-oxoglutarate-dependent dioxygenase phqC. Finally, the remaining members of the paraherquamide cluster, including phqI as well as phqM (or phqH), do not have a clearly prescribed role and appear to be redundant. This Penicillium fellutanum protein is 2-oxoglutarate-dependent dioxygenase phqC.